The sequence spans 425 residues: Serine--tRNA ligase (425 aa).

L-serine is bound at residue 233–235; sequence TAE. 264–266 is an ATP binding site; sequence RRE. Glu-287 is an L-serine binding site. Residue 351–354 coordinates ATP; it reads EISS. Ser-387 is a binding site for L-serine.

The protein belongs to the class-II aminoacyl-tRNA synthetase family. Type-1 seryl-tRNA synthetase subfamily. Homodimer. The tRNA molecule binds across the dimer.

Its subcellular location is the cytoplasm. The catalysed reaction is tRNA(Ser) + L-serine + ATP = L-seryl-tRNA(Ser) + AMP + diphosphate + H(+). The enzyme catalyses tRNA(Sec) + L-serine + ATP = L-seryl-tRNA(Sec) + AMP + diphosphate + H(+). Its pathway is aminoacyl-tRNA biosynthesis; selenocysteinyl-tRNA(Sec) biosynthesis; L-seryl-tRNA(Sec) from L-serine and tRNA(Sec): step 1/1. Functionally, catalyzes the attachment of serine to tRNA(Ser). Is also able to aminoacylate tRNA(Sec) with serine, to form the misacylated tRNA L-seryl-tRNA(Sec), which will be further converted into selenocysteinyl-tRNA(Sec). This is Serine--tRNA ligase from Thermotoga neapolitana (strain ATCC 49049 / DSM 4359 / NBRC 107923 / NS-E).